The sequence spans 759 residues: TSK-associating protein 1 (759 aa).

The signal sequence occupies residues 1 to 29 (MEIYTMKTNFLVLALSLCILLSSFHEVSC). A disordered region spans residues 55–74 (GKDDEDQSAKIQSENQNNTT). Over residues 63–74 (AKIQSENQNNTT) the composition is skewed to polar residues. 10 EFE repeat repeats span residues 91–138 (VGSV…DEEL), 139–176 (SAHRQKMLEEIEHEFEAASDSLKQLKTDDVNEGNDEEH), 177–215 (SAKRQSLLEEIEREFEAATKELEQLKVNDFTGDKDDEEH), 216–254 (SAKRKSMLEAIEREFEAAMEGIEALKVSDSTGSGDDEEQ), 255–293 (SAKRLSMLEEIEREFEAASKGLEQLRASDSTADNNEEEH), 294–329 (AAKGQSLLEEIEREFEAATESLKQLQVDDSTEDKEH), 330–368 (FTAAKRQSLLEEIEREFEAATKDLKQLNDFTEGSADDEQ), 369–407 (SAKRNKMLEDIEREFEAATIGLEQLKANDFSEGNNNEEQ), 408–443 (SAKRKSMLEEIEREFEAAIGGLKQIKVDDSRNLEEE), and 444–473 (SAKRKIILEEMEREFEEAHSGINAKADKEE). The 10 X approximate EFE repeat stretch occupies residues 91 to 473 (VGSVSDESVG…GINAKADKEE (383 aa)). 2 coiled-coil regions span residues 142–461 (RQKM…FEEA) and 685–734 (IKKL…AKDE). Disordered regions lie at residues 154–184 (EAASDSLKQLKTDDVNEGNDEEHSAKRQSLL), 200–219 (QLKVNDFTGDKDDEEHSAKR), 271–332 (AASK…HFTA), and 393–414 (LKANDFSEGNNNEEQSAKRKSM).

As to quaternary structure, homomultimer. Interacts (via C-terminal domain) with GIP1, CSN1 (via N-terminal domain) and TSK (via TPR repeats). Post-translationally, binds calcium through the EFE repeats. Expressed preferentially in flowers and shoot apex.

The protein resides in the endoplasmic reticulum lumen. The protein localises to the nucleus envelope. It is found in the cytoplasm. Functionally, involved in seedling development in the dark. May be involved, when interacting with TSK, in the organization of spindle microtubules and may participate, when interacting with GIP1, in structural links between the nuclear envelope and the cytoskeleton. The protein is TSK-associating protein 1 (TSA1) of Arabidopsis thaliana (Mouse-ear cress).